Consider the following 137-residue polypeptide: MMVSICEQKLQHFSAVFLLILCLGMMSAAPPPDPSLDNEWKEWKTKFAKAYNLNEERHRRLVWEENKKKIEAHNADYEQGKTSFYMGLNQFSDLTPEEFKTNCYGNSLNRGEMAPDLPEYEDLGKNSYLTPGRAQPE.

The N-terminal stretch at 1 to 27 (MMVSICEQKLQHFSAVFLLILCLGMMS) is a signal peptide. Tandem repeats lie at residues 39-41 (EWK) and 42-44 (EWK). Residues 39–44 (EWKEWK) are 2 X 3 AA tandem repeats of E-W-K. The disordered stretch occupies residues 114–137 (APDLPEYEDLGKNSYLTPGRAQPE).

This sequence to the propeptide regions of cysteine proteases.

Its subcellular location is the secreted. In terms of biological role, not known, expressed in activated T-cell. This chain is Protein CTLA-2-alpha (Ctla2a), found in Mus musculus (Mouse).